Reading from the N-terminus, the 199-residue chain is dCTP deaminase, dUMP-forming (199 aa).

Residues Lys-101–Arg-106, Asp-119, Thr-127–Glu-129, Gln-148, Tyr-162, and Gln-174 contribute to the dCTP site. Catalysis depends on Glu-129, which acts as the Proton donor/acceptor. Positions Gly-163–Arg-199 are disordered. The segment covering Tyr-171 to Tyr-183 has biased composition (polar residues).

Belongs to the dCTP deaminase family. In terms of assembly, homotrimer.

The catalysed reaction is dCTP + 2 H2O = dUMP + NH4(+) + diphosphate. It participates in pyrimidine metabolism; dUMP biosynthesis; dUMP from dCTP: step 1/1. Bifunctional enzyme that catalyzes both the deamination of dCTP to dUTP and the hydrolysis of dUTP to dUMP without releasing the toxic dUTP intermediate. The chain is dCTP deaminase, dUMP-forming from Nocardia farcinica (strain IFM 10152).